Reading from the N-terminus, the 558-residue chain is Urocanate hydratase (558 aa).

NAD(+) contacts are provided by residues 54 to 55 (GG), glutamine 132, 178 to 180 (GMG), glutamate 198, 244 to 245 (NA), 265 to 269 (QTSAH), 275 to 276 (YL), and tyrosine 324. The active site involves cysteine 412. An NAD(+)-binding site is contributed by glycine 494.

It belongs to the urocanase family. The cofactor is NAD(+).

Its subcellular location is the cytoplasm. The catalysed reaction is 4-imidazolone-5-propanoate = trans-urocanate + H2O. The protein operates within amino-acid degradation; L-histidine degradation into L-glutamate; N-formimidoyl-L-glutamate from L-histidine: step 2/3. In terms of biological role, catalyzes the conversion of urocanate to 4-imidazolone-5-propionate. The protein is Urocanate hydratase of Acinetobacter baumannii (strain SDF).